Here is a 196-residue protein sequence, read N- to C-terminus: Peptidyl-tRNA hydrolase (196 aa).

Tyr-21 provides a ligand contact to tRNA. The active-site Proton acceptor is the His-26. Phe-72, Asn-74, and Asn-120 together coordinate tRNA.

It belongs to the PTH family. In terms of assembly, monomer.

Its subcellular location is the cytoplasm. It catalyses the reaction an N-acyl-L-alpha-aminoacyl-tRNA + H2O = an N-acyl-L-amino acid + a tRNA + H(+). Its function is as follows. Hydrolyzes ribosome-free peptidyl-tRNAs (with 1 or more amino acids incorporated), which drop off the ribosome during protein synthesis, or as a result of ribosome stalling. Catalyzes the release of premature peptidyl moieties from peptidyl-tRNA molecules trapped in stalled 50S ribosomal subunits, and thus maintains levels of free tRNAs and 50S ribosomes. This Mycobacteroides abscessus (strain ATCC 19977 / DSM 44196 / CCUG 20993 / CIP 104536 / JCM 13569 / NCTC 13031 / TMC 1543 / L948) (Mycobacterium abscessus) protein is Peptidyl-tRNA hydrolase.